The primary structure comprises 73 residues: Adipokinetic prohormone type 2 (73 aa).

The first 20 residues, 1–20, serve as a signal peptide directing secretion; that stretch reads MCRIFIVLLVVAALAIIIEG. Residue glutamine 21 is modified to Pyrrolidone carboxylic acid. Asparagine 30 is modified (asparagine amide). Residues 34–73 constitute a propeptide that is removed on maturation; the sequence is SISSEQINDDCNPEEAIFQIYKLIVSEGERIRACQRDGKM.

Expressed in corpora cardiaca (CC), corpora allata (CA) and gnathal ganglion (GNG) (at protein level). Expression in CC and CA detected in all animals, expression in GNG detected in few animals (at protein level). Not expressed in antennal lobe (AL) (at protein level).

It is found in the secreted. This hormone, released from cells in the corpora cardiaca, causes release of diglycerides from the fat body and stimulation of muscles to use these diglycerides as an energy source during energy-demanding processes. This Agrotis ipsilon (Black cutworm moth) protein is Adipokinetic prohormone type 2.